A 236-amino-acid polypeptide reads, in one-letter code: NAD-dependent protein deacetylase (236 aa).

One can recognise a Deacetylase sirtuin-type domain in the interval 1–236 (MIKDWLQESN…EFLRSISNEG (236 aa)). Residues alanine 18, threonine 22, phenylalanine 29, arginine 30, glutamine 96, valine 98, aspartate 99, and histidine 114 each coordinate NAD(+). Position 29 (phenylalanine 29) interacts with nicotinamide. 2 residues coordinate nicotinamide: valine 98 and aspartate 99. Histidine 114 (proton acceptor) is an active-site residue. Zn(2+) is bound by residues cysteine 122, cysteine 125, cysteine 141, and cysteine 143. NAD(+) is bound by residues serine 181, serine 182, asparagine 206, and isoleucine 225.

It belongs to the sirtuin family. Class U subfamily. Requires Zn(2+) as cofactor.

The protein localises to the cytoplasm. It catalyses the reaction N(6)-acetyl-L-lysyl-[protein] + NAD(+) + H2O = 2''-O-acetyl-ADP-D-ribose + nicotinamide + L-lysyl-[protein]. In terms of biological role, NAD-dependent protein deacetylase which modulates the activities of several enzymes which are inactive in their acetylated form. The protein is NAD-dependent protein deacetylase of Oceanobacillus iheyensis (strain DSM 14371 / CIP 107618 / JCM 11309 / KCTC 3954 / HTE831).